Reading from the N-terminus, the 195-residue chain is Small ribosomal subunit protein bS16 (195 aa).

Residues 171–181 (PEAPVAAAEPA) are compositionally biased toward low complexity. A disordered region spans residues 171–195 (PEAPVAAAEPAPEVKAEEKEEGGEA).

This sequence belongs to the bacterial ribosomal protein bS16 family.

The sequence is that of Small ribosomal subunit protein bS16 from Chlorobium luteolum (strain DSM 273 / BCRC 81028 / 2530) (Pelodictyon luteolum).